The primary structure comprises 392 residues: uncharacterized protein (392 aa).

The first 19 residues, 1 to 19 (MRRIVCPPVLFLSASLLTG), serve as a signal peptide directing secretion. Cys-20 carries N-palmitoyl cysteine lipidation. A lipid anchor (S-diacylglycerol cysteine) is attached at Cys-20. Residues 148–173 (SSGSSGGGGGGSGSSSDGGIKNGSDE) are disordered. A compositionally biased stretch (gly residues) spans 151–160 (SSGGGGGGSG).

This sequence belongs to the TP013X lipoprotein family.

It localises to the cell membrane. This is an uncharacterized protein from Treponema pallidum (strain Nichols).